A 209-amino-acid polypeptide reads, in one-letter code: Putative 3-methyladenine DNA glycosylase (209 aa).

The protein belongs to the DNA glycosylase MPG family.

This chain is Putative 3-methyladenine DNA glycosylase, found in Lactiplantibacillus plantarum (strain ATCC BAA-793 / NCIMB 8826 / WCFS1) (Lactobacillus plantarum).